A 593-amino-acid polypeptide reads, in one-letter code: Transmembrane 9 superfamily member 4 (593 aa).

An N-terminal signal peptide occupies residues 1-25 (MVLLPSMTSLLLVFLFLYGVSPVIS). The Lumenal segment spans residues 26–230 (DGSDHRYKVG…SMPHHLEIHW (205 aa)). The helical transmembrane segment at 231–251 (FSIINSCVTVLLLTGFLATIL) threads the bilayer. Topologically, residues 252–303 (MRVLKNDFVKYAHDEEAVDDQEETGWKLIHGDVFRFPKHKSLLAAALGSGTQ) are cytoplasmic. A helical transmembrane segment spans residues 304-324 (LFTLAVFIFMLALVGVFYPYN). The Lumenal portion of the chain corresponds to 325 to 326 (RG). The chain crosses the membrane as a helical span at residues 327–347 (ALFTALVVIYALTSGIAGYTA). Residues 348–366 (ASFYCQLEGTNWVRNVILT) are Cytoplasmic-facing. Residues 367 to 387 (GSLFCGPLLITFSFLNTVAIA) traverse the membrane as a helical segment. Topologically, residues 388–398 (YQATAALPFGT) are lumenal. Residues 399–419 (IVVIFLIWALVTSPLLILGGI) form a helical membrane-spanning segment. The Cytoplasmic segment spans residues 420 to 453 (AGKNRKSEFQAPCRTTKYPREIPPMRWYRRTLPQ). A helical membrane pass occupies residues 454–474 (MAMAGFLPFSAIYIELYYIFA). Residues 475–486 (SVWGHRIYTIYS) are Lumenal-facing. Residues 487–507 (ILSIVFLILVIVTAFITVALT) traverse the membrane as a helical segment. Residues 508-522 (YFQLAAEDHEWWWRS) lie on the Cytoplasmic side of the membrane. Residues 523–543 (LLCGGSTGLFIYAYCLYYYYA) traverse the membrane as a helical segment. Topologically, residues 544–554 (RSDMSGFMQTS) are lumenal. A helical membrane pass occupies residues 555–575 (FFFGYMACICYGFFLMLGTIG). Over 576–593 (FCASLLFVRHIYRSIKCE) the chain is Cytoplasmic. Residues 582–587 (FVRHIY) carry the Endoplasmic reticulum export signal motif. Residues 591–593 (KCE) carry the Golgi retention signal motif.

Belongs to the nonaspanin (TM9SF) (TC 9.A.2) family.

It localises to the endosome membrane. Its subcellular location is the golgi apparatus membrane. In Arabidopsis thaliana (Mouse-ear cress), this protein is Transmembrane 9 superfamily member 4.